We begin with the raw amino-acid sequence, 315 residues long: tRNA wybutosine-synthesizing protein 5 (315 aa).

Positions 102–267 (DEKYYLRSLG…YDTTDTYGNK (166 aa)) constitute a JmjC domain. Y106 contacts 2-oxoglutarate. Residues H160 and D162 each coordinate Fe cation. The 2-oxoglutarate site is built by N166 and K175. Position 235 (H235) interacts with Fe cation.

The protein belongs to the TYW5 family. Homodimer. The cofactor is Fe(2+).

It catalyses the reaction 7-[(3S)-3-amino-3-carboxypropyl]wyosine(37) in tRNA(Phe) + 2-oxoglutarate + O2 = 7-(2-hydroxy-3-amino-3-carboxypropyl)wyosine(37) in tRNA(Phe) + succinate + CO2. The protein operates within tRNA modification; wybutosine-tRNA(Phe) biosynthesis. In terms of biological role, tRNA hydroxylase that acts as a component of the wybutosine biosynthesis pathway. Wybutosine is a hyper modified guanosine with a tricyclic base found at the 3'-position adjacent to the anticodon of eukaryotic phenylalanine tRNA. Catalyzes the hydroxylation of 7-(a-amino-a-carboxypropyl)wyosine (yW-72) into undermodified hydroxywybutosine (OHyW*). OHyW* being further transformed into hydroxywybutosine (OHyW) by LCMT2/TYW4. OHyW is a derivative of wybutosine found in higher eukaryotes. This chain is tRNA wybutosine-synthesizing protein 5 (Tyw5), found in Mus musculus (Mouse).